The following is a 251-amino-acid chain: Triosephosphate isomerase (251 aa).

9-11 contacts substrate; the sequence is NWK. Catalysis depends on His95, which acts as the Electrophile. The active-site Proton acceptor is the Glu167. Residues Gly173, Ser212, and 233–234 contribute to the substrate site; that span reads GG.

This sequence belongs to the triosephosphate isomerase family. Homodimer.

The protein localises to the cytoplasm. The enzyme catalyses D-glyceraldehyde 3-phosphate = dihydroxyacetone phosphate. It functions in the pathway carbohydrate biosynthesis; gluconeogenesis. Its pathway is carbohydrate degradation; glycolysis; D-glyceraldehyde 3-phosphate from glycerone phosphate: step 1/1. In terms of biological role, involved in the gluconeogenesis. Catalyzes stereospecifically the conversion of dihydroxyacetone phosphate (DHAP) to D-glyceraldehyde-3-phosphate (G3P). This Pseudomonas putida (strain GB-1) protein is Triosephosphate isomerase.